Here is a 54-residue protein sequence, read N- to C-terminus: Ovomucoid (54 aa).

Residues valine 4 to cysteine 54 form the Kazal-like domain. 3 disulfides stabilise this stretch: cysteine 6/cysteine 36, cysteine 14/cysteine 33, and cysteine 22/cysteine 54. Asparagine 43 is a glycosylation site (N-linked (GlcNAc...) asparagine).

The protein localises to the secreted. The sequence is that of Ovomucoid from Opisthocomus hoazin (Hoatzin).